Consider the following 226-residue polypeptide: ATP synthase subunit a (226 aa).

Transmembrane regions (helical) follow at residues 18–38, 76–96, 105–125, 134–154, 179–199, and 201–221; these read FITG…SLGA, YFPL…IGII, SWSF…FEGI, FAHF…IEII, LIML…VLFF, and GILQ…GAVL.

Belongs to the ATPase A chain family. In terms of assembly, F-type ATPases have 2 components, CF(1) - the catalytic core - and CF(0) - the membrane proton channel. CF(1) has five subunits: alpha(3), beta(3), gamma(1), delta(1), epsilon(1). CF(0) has three main subunits: a(1), b(2) and c(9-12). The alpha and beta chains form an alternating ring which encloses part of the gamma chain. CF(1) is attached to CF(0) by a central stalk formed by the gamma and epsilon chains, while a peripheral stalk is formed by the delta and b chains.

It is found in the cell inner membrane. In terms of biological role, key component of the proton channel; it plays a direct role in the translocation of protons across the membrane. The chain is ATP synthase subunit a from Helicobacter acinonychis (strain Sheeba).